The primary structure comprises 156 residues: Large ribosomal subunit protein uL15 (156 aa).

Positions 1 to 44 (MKLNELRDNPGASPKRTRVGRGPGSGKGKMGGRGIKGQKSRSGV) are disordered. Gly residues predominate over residues 21–35 (RGPGSGKGKMGGRGI).

It belongs to the universal ribosomal protein uL15 family. As to quaternary structure, part of the 50S ribosomal subunit.

In terms of biological role, binds to the 23S rRNA. The polypeptide is Large ribosomal subunit protein uL15 (Ruegeria sp. (strain TM1040) (Silicibacter sp.)).